A 229-amino-acid chain; its full sequence is UPF0173 metal-dependent hydrolase SAB1566c (229 aa).

It belongs to the UPF0173 family.

The protein is UPF0173 metal-dependent hydrolase SAB1566c of Staphylococcus aureus (strain bovine RF122 / ET3-1).